Consider the following 440-residue polypeptide: Lipopolysaccharide-processing protein LpsZ (440 aa).

This sequence to E.coli capsule polysaccharide export protein KpsC.

It is found in the cytoplasm. Involved in the invasion of nitrogen fixation nodules. May be involved in the biosynthesis of lipopolysaccharides as an enzyme or a regulatory protein. The chain is Lipopolysaccharide-processing protein LpsZ (lpsZ) from Rhizobium meliloti (Ensifer meliloti).